The following is a 491-amino-acid chain: Putative diacyglycerol O-acyltransferase MT2557 (491 aa).

The active-site Proton acceptor is the H145.

This sequence belongs to the long-chain O-acyltransferase family.

It catalyses the reaction an acyl-CoA + a 1,2-diacyl-sn-glycerol = a triacyl-sn-glycerol + CoA. The protein operates within glycerolipid metabolism; triacylglycerol biosynthesis. The polypeptide is Putative diacyglycerol O-acyltransferase MT2557 (Mycobacterium tuberculosis (strain CDC 1551 / Oshkosh)).